Reading from the N-terminus, the 479-residue chain is FAD-dependent monooxygenase atmM (479 aa).

The helical transmembrane segment at 10 to 30 (IIVGGSVAGLTLAHCLQRAGI) threads the bilayer. Glu36, Gly50, Arg109, Asp309, and Ala322 together coordinate FAD. The chain crosses the membrane as a helical span at residues 445 to 465 (WILVLLVIVVSFGLHSPELVI).

Belongs to the paxM FAD-dependent monooxygenase family. FAD is required as a cofactor.

The protein localises to the membrane. It participates in secondary metabolite biosynthesis. Functionally, FAD-dependent monooxygenase; part of the ATM1 gene cluster that mediates the biosynthesis of aflatrem, a tremorgenic mycotoxin with acute neurotoxic effects. Synthesis of geranylgeranyl diphosphate (GGPP) by AtmG (a GGPP synthase) precedes condensation of GGPP with indole 3-glycerol phosphate, followed by epoxidation and cyclization by AtmM (a FAD-dependent monooxygenase) and AtmC (a prenyltransferase) to produce paspaline. AtmB is also essential for paspaline production, but its exact role has not been identified yet. AtmP, a cytochrome P450 monooxygenase, subsequently converts paspaline to 13-desoxypaxilline via PC-M6 by removal of the C-30 methyl group and oxidation at C-10. AtmQ, a cytochrome P450 monooxygenase, then catalyzes the oxidation of 13-desoxypaxilline, first at C-7 to produce paspalicine and then at C-13 to form paspalinine. Finally, AtmD prenylates paspalinine to form aflatrem. The sequence is that of FAD-dependent monooxygenase atmM from Aspergillus flavus.